The chain runs to 410 residues: Chorismate synthase (410 aa).

Arginine 40 and arginine 46 together coordinate NADP(+). Residues 129 to 131, 257 to 258, glycine 302, 317 to 321, and arginine 343 each bind FMN; these read RSS, QA, and KPISS.

This sequence belongs to the chorismate synthase family. In terms of assembly, homotetramer. FMNH2 is required as a cofactor.

It carries out the reaction 5-O-(1-carboxyvinyl)-3-phosphoshikimate = chorismate + phosphate. It participates in metabolic intermediate biosynthesis; chorismate biosynthesis; chorismate from D-erythrose 4-phosphate and phosphoenolpyruvate: step 7/7. Its function is as follows. Catalyzes the anti-1,4-elimination of the C-3 phosphate and the C-6 proR hydrogen from 5-enolpyruvylshikimate-3-phosphate (EPSP) to yield chorismate, which is the branch point compound that serves as the starting substrate for the three terminal pathways of aromatic amino acid biosynthesis. This reaction introduces a second double bond into the aromatic ring system. The sequence is that of Chorismate synthase from Chlorobaculum parvum (strain DSM 263 / NCIMB 8327) (Chlorobium vibrioforme subsp. thiosulfatophilum).